A 586-amino-acid chain; its full sequence is GRB2-associated-binding protein 3 (586 aa).

One can recognise a PH domain in the interval 5–117 (DAVCTGWLVK…WVHSISQVCN (113 aa)). Disordered regions lie at residues 149–171 (AHAA…TEET) and 281–335 (SSTI…KKPE). The segment covering 283–292 (TIQVDKNQGS) has biased composition (polar residues). Residues 316–326 (HLSERRQEEWS) show a composition bias toward basic and acidic residues. Ser344 is modified (phosphoserine). The disordered stretch occupies residues 401-453 (GASGLGPHCSPDDYIPMNSGSISSPLPELPANLEPPPVNRDLKPQRKSRPPPL). Ser482 carries the post-translational modification Phosphoserine.

It belongs to the GAB family. In terms of assembly, interacts with PIK3R/p85, SHP2 and GRAP2/MONA. May interact with Grb2. In terms of processing, phosphorylated on tyrosine residue(s) after macrophage colony-stimulating factor (M-CSF) receptor stimulation.

The protein is GRB2-associated-binding protein 3 (GAB3) of Homo sapiens (Human).